The primary structure comprises 580 residues: Mucolipin-1 (580 aa).

The interval 1-38 is disordered; the sequence is MTDPAGPRGSETERLLTPNPGYGTQVGPSPAPPTPPEE. Residues 1-65 are Cytoplasmic-facing; it reads MTDPAGPRGS…FRAKGRKPCK (65 aa). Ser-10 carries the post-translational modification Phosphoserine. The short motif at 11-16 is the Dileucine motif; mediates targeting to lysosomes element; that stretch reads ETERLL. Residues 42 to 62 form an interaction with phosphoinositides region; sequence RRRLKYFFMSPCDKFRAKGRK. The chain crosses the membrane as a helical span at residues 66-86; it reads LMLQVVKILVVTVQLILFGLS. The Extracellular portion of the chain corresponds to 87–298; it reads NQLAVTFREE…VFRHGDNSFR (212 aa). Residues 107–121 form an extracellular/lumenal pore loop region; sequence LGYSDGADDTFAAYT. Cysteines 166 and 192 form a disulfide. N-linked (GlcNAc...) asparagine glycosylation occurs at Asn-230. Cys-253 and Cys-284 form a disulfide bridge. Residues 299 to 321 traverse the membrane as a helical segment; that stretch reads LLFDVVVILTCSLSFLLCARSLL. Over 322 to 350 the chain is Cytoplasmic; that stretch reads RGFLLQNEFVRFMWRQRRRVISLWERLEF. Residues 351–371 form a helical membrane-spanning segment; that stretch reads VNGWYILLVTSDVLTISGTIM. At 372–382 the chain is on the extracellular side; sequence KIGIEAKNLAS. Residues 383-405 traverse the membrane as a helical segment; sequence YDVCSILLGTSTLLVWVGVIRYL. At 406 to 427 the chain is on the cytoplasmic side; sequence TFFHNYNILIATLRVALPSVMR. The helical transmembrane segment at 428–448 threads the bilayer; that stretch reads FCCCVAVIYLGYCFCGWIVLG. At 449–456 the chain is on the extracellular side; that stretch reads PYHVKFRS. Positions 457-477 form an intramembrane region, pore-forming; sequence LSMVSECLFSLINGDDMFVTF. A Selectivity filter motif is present at residues 469-474; that stretch reads NGDDMF. The Extracellular portion of the chain corresponds to 478-491; it reads AAMQAQQGRSSLVW. The chain crosses the membrane as a helical span at residues 492-513; that stretch reads LFSQLYLYSFISLFIYMVLSLF. Topologically, residues 514–580 are cytoplasmic; it reads IALITGAYDT…PSEEHSLLVN (67 aa). Residues Ser-557 and Ser-559 each carry the phosphoserine; by PAK modification. Positions 565–567 are required for palmitoylation and association with membranes; it reads CCC. The short motif at 573-578 is the Dileucine internalization motif; mediates AP2 complex-dependent internalization element; it reads EEHSLL.

Belongs to the transient receptor (TC 1.A.4) family. Polycystin subfamily. MCOLN1 sub-subfamily. In terms of assembly, homotetramer. Homooligomer. Can heterooligomerize with MCOLN2 or MCOLN3; heteromeric assemblies have different channel properties as compared to the respective homooligomers and may be tissue-specific. Interacts with PDCD6. Interacts with TMEM163. Interacts with LAPTM4B. Palmitoylated; involved in association with membranes. Post-translationally, phosphorylation by PKA inhibits channel activity. Dephosphorylation increases activity. In terms of processing, proteolytically cleaved probably involving multiple lysosomal proteases including cathepsin B; inhibits lysosomal channel activity.

It localises to the late endosome membrane. Its subcellular location is the lysosome membrane. The protein localises to the cytoplasmic vesicle membrane. The protein resides in the cell projection. It is found in the phagocytic cup. It localises to the cytoplasmic vesicle. Its subcellular location is the phagosome membrane. The protein localises to the cell membrane. It carries out the reaction Ca(2+)(in) = Ca(2+)(out). The catalysed reaction is Fe(2+)(in) = Fe(2+)(out). It catalyses the reaction Mg(2+)(in) = Mg(2+)(out). The enzyme catalyses K(+)(in) = K(+)(out). It carries out the reaction Na(+)(in) = Na(+)(out). Its activity is regulated as follows. Channel activity is controlled by multiple regulatory mechanisms in different subcellular compartments. Channel function is transiently modulated by changes in Ca(2+) in a pH-dependent manner; pH changes modify the aggregation state of unitary channels; a negative cooperativity between extracellular/lumenal Ca(2+) and H(+) is suggested. Regulated by phosphoinositides in a compartment-specific manner: in lysosomes activated by PtdIns(3,5)P2 (Phosphatidylinositol 3,5-bisphosphate) and at the plasma membrane inhibited by PtdIns(4,5)P2 (Phosphatidylinositol 4,5-bisphosphate). Nonselective cation channel probably playing a role in the regulation of membrane trafficking events and of metal homeostasis. Acts as a Ca(2+)-permeable cation channel with inwardly rectifying activity. Proposed to play a major role in Ca(2+) release from late endosome and lysosome vesicles to the cytoplasm, which is important for many lysosome-dependent cellular events, including the fusion and trafficking of these organelles, exocytosis and autophagy. Required for efficient uptake of large particles in macrophages in which Ca(2+) release from the lysosomes triggers lysosomal exocytosis. May also play a role in phagosome-lysosome fusion. Involved in lactosylceramide trafficking indicative for a role in the regulation of late endocytic membrane fusion/fission events. By mediating lysosomal Ca(2+) release is involved in regulation of mTORC1 signaling and in mTOR/TFEB-dependent lysosomal adaptation to environmental cues such as nutrient levels. Seems to act as lysosomal active oxygen species (ROS) sensor involved in ROS-induced TFEB activation and autophagy. Also functions as a Fe(2+) permeable channel in late endosomes and lysosomes. Also permeable to Mg(2+), Na(+). K(+) and Cs(+). Proposed to play a role in zinc homeostasis probably implicating its association with TMEM163. In adaptive immunity, TRPML2 and TRPML1 may play redundant roles in the function of the specialized lysosomes of B cells. In terms of biological role, may contribute to cellular lipase activity within the late endosomal pathway or at the cell surface which may be involved in processes of membrane reshaping and vesiculation, especially the growth of tubular structures. However, it is not known, whether it conveys the enzymatic activity directly, or merely facilitates the activity of an associated phospholipase. The polypeptide is Mucolipin-1 (MCOLN1) (Macaca fascicularis (Crab-eating macaque)).